We begin with the raw amino-acid sequence, 241 residues long: uncharacterized protein (241 aa).

The disordered stretch occupies residues 19 to 53; the sequence is KRIGYGMGEKSSAGSSRDQTYSVKPASDVKDKKKV. Residues 30 to 39 are compositionally biased toward polar residues; sequence SAGSSRDQTY.

This is an uncharacterized protein from Ostreid herpesvirus 1 (isolate France) (OsHV-1).